Consider the following 335-residue polypeptide: Biotin synthase (335 aa).

In terms of domain architecture, Radical SAM core spans 46–274; the sequence is YKVQLASLFS…KSKIRLSAGR (229 aa). Cys-61, Cys-65, and Cys-68 together coordinate [4Fe-4S] cluster. [2Fe-2S] cluster-binding residues include Cys-105, Cys-137, Cys-197, and Arg-269.

Belongs to the radical SAM superfamily. Biotin synthase family. Homodimer. [4Fe-4S] cluster is required as a cofactor. It depends on [2Fe-2S] cluster as a cofactor.

It carries out the reaction (4R,5S)-dethiobiotin + (sulfur carrier)-SH + 2 reduced [2Fe-2S]-[ferredoxin] + 2 S-adenosyl-L-methionine = (sulfur carrier)-H + biotin + 2 5'-deoxyadenosine + 2 L-methionine + 2 oxidized [2Fe-2S]-[ferredoxin]. Its pathway is cofactor biosynthesis; biotin biosynthesis; biotin from 7,8-diaminononanoate: step 2/2. Catalyzes the conversion of dethiobiotin (DTB) to biotin by the insertion of a sulfur atom into dethiobiotin via a radical-based mechanism. This Prochlorococcus marinus subsp. pastoris (strain CCMP1986 / NIES-2087 / MED4) protein is Biotin synthase.